Here is a 312-residue protein sequence, read N- to C-terminus: Glyoxylate/hydroxypyruvate reductase A (312 aa).

The active site involves Arg227. Catalysis depends on His275, which acts as the Proton donor.

It belongs to the D-isomer specific 2-hydroxyacid dehydrogenase family. GhrA subfamily.

The protein resides in the cytoplasm. The enzyme catalyses glycolate + NADP(+) = glyoxylate + NADPH + H(+). It catalyses the reaction (R)-glycerate + NAD(+) = 3-hydroxypyruvate + NADH + H(+). The catalysed reaction is (R)-glycerate + NADP(+) = 3-hydroxypyruvate + NADPH + H(+). Its function is as follows. Catalyzes the NADPH-dependent reduction of glyoxylate and hydroxypyruvate into glycolate and glycerate, respectively. This Escherichia fergusonii (strain ATCC 35469 / DSM 13698 / CCUG 18766 / IAM 14443 / JCM 21226 / LMG 7866 / NBRC 102419 / NCTC 12128 / CDC 0568-73) protein is Glyoxylate/hydroxypyruvate reductase A.